The sequence spans 460 residues: Argininosuccinate lyase (460 aa).

It belongs to the lyase 1 family. Argininosuccinate lyase subfamily.

The protein resides in the cytoplasm. It carries out the reaction 2-(N(omega)-L-arginino)succinate = fumarate + L-arginine. It functions in the pathway amino-acid biosynthesis; L-arginine biosynthesis; L-arginine from L-ornithine and carbamoyl phosphate: step 3/3. The chain is Argininosuccinate lyase from Desulforamulus reducens (strain ATCC BAA-1160 / DSM 100696 / MI-1) (Desulfotomaculum reducens).